Reading from the N-terminus, the 1239-residue chain is Anillin (1239 aa).

Disordered regions lie at residues Cys32–Gly67, Glu230–Gln265, Phe493–Gly621, and Gly684–Ser716. The segment covering Arg53–Ala63 has biased composition (low complexity). The interaction with and bundling of F-actin stretch occupies residues Glu126–Gln371. A compositionally biased stretch (basic and acidic residues) spans Pro252 to Gln265. Low complexity predominate over residues Ser500–Arg518. Residues Pro519 to Ile528 show a composition bias toward pro residues. The segment covering Glu551–Arg563 has biased composition (basic and acidic residues). A compositionally biased stretch (acidic residues) spans Asp594–Gln610. A compositionally biased stretch (polar residues) spans Ala699–Ser716. Ser712 carries the phosphoserine modification. Thr740 carries the phosphothreonine modification. 2 positions are modified to phosphoserine: Ser744 and Ser754. The residue at position 831 (Thr831) is a Phosphothreonine. Residues Asp834 to Val861 adopt a coiled-coil conformation. The PH domain maps to Ser1106–Thr1230.

As to quaternary structure, interacts with and bundles F-actin. In terms of tissue distribution, accumulates in the ring canals that interconnect cells of the germline cysts in males and the ovarian follicles in females. These structures develop from arrested contractile rings after a specialized cytokinesis in which the closing of the invaginating plasma membrane is incomplete. Also concentrates in the arrested cleavage furrows that initially link the oocyte to its 15 nurse cells in the early egg chamber and is subsequently lost from these furrows as germline cell division is completed.

The protein localises to the nucleus. It is found in the cytoplasm. It localises to the cytoskeleton. The protein resides in the cell cortex. Its subcellular location is the cell projection. The protein localises to the cilium. It is found in the flagellum. Required for cytokinesis. Essential for the structural integrity of the cleavage furrow and for completion of cleavage furrow ingression and proper formation of the midbody. Required during cellularization of syncytial embryos for the proper formation and function of the furrow canals, the stable inward folds of the plasma membrane which separate the peripheral nuclei. Also required for the formation of the pole cells, the progenitors of the adult germline which are formed by cytokinesis of the cytoplasmic buds at the posterior pole of the syncytial embryo. Essential for embryonic viability. The protein is Anillin (scra) of Drosophila melanogaster (Fruit fly).